A 581-amino-acid polypeptide reads, in one-letter code: MRTSQYLLATLKEAPKNCKAISHQLMLRAGLIRQVSSGLYTWLPTGLRVLRKIENIIREEMSKIGAIEIAMPIVQPARLWKKSGRWTGYGTELLRFKNRNNQEFVLGPTHEEMVSEIICKETMLYKQFPLIVYQIHTKYRDEARPRSGVIRAREFIMKDGYSFHINQKSLQNTYNNMYQTYHTIFNRIGLNFCVVQAEPGKIGGALSHEFQAYSENGEDSIAVPMIPDNNLIDFQLSNDVIPIKIQPKTAVETMQLIAAPNIRSVEELINQFNLPIHQFVKTIIVRAKNKHINNDYSLLGLVIRADHQISLKKIAMIPQIHIPLSCIEPEEIQKITGAQPNLLGPINLSIPLIIDYNVAKMNDFVAGSNMSGKYFFGVNWNRDILFSKVADLHEVLHHNSYTNKKNILSIHNCIEIGHIFQLGQKYLNLHTNYSQKNNEHKHNLSMEMGCYGIGITRIIAVIIEQNYDKNGILWPDVIAPFKLAIIPIDMYRSVNVRNIAEKIYTQLLSVIGIDILIDDRKEYPGTMFADIDLIGIPHILIISDRSLANQEVEYKYRKKNKIEKIKLEMLIRYLIEKIVSS.

It belongs to the class-II aminoacyl-tRNA synthetase family. ProS type 1 subfamily. As to quaternary structure, homodimer.

The protein localises to the cytoplasm. The enzyme catalyses tRNA(Pro) + L-proline + ATP = L-prolyl-tRNA(Pro) + AMP + diphosphate. Functionally, catalyzes the attachment of proline to tRNA(Pro) in a two-step reaction: proline is first activated by ATP to form Pro-AMP and then transferred to the acceptor end of tRNA(Pro). As ProRS can inadvertently accommodate and process non-cognate amino acids such as alanine and cysteine, to avoid such errors it has two additional distinct editing activities against alanine. One activity is designated as 'pretransfer' editing and involves the tRNA(Pro)-independent hydrolysis of activated Ala-AMP. The other activity is designated 'posttransfer' editing and involves deacylation of mischarged Ala-tRNA(Pro). The misacylated Cys-tRNA(Pro) is not edited by ProRS. The polypeptide is Proline--tRNA ligase (Blochmanniella pennsylvanica (strain BPEN)).